The sequence spans 108 residues: MSQWQNICKIDDILPGTGVCALSGGEQVAIFRPYHSDQVFAISNIDPFFEASVLSRGLIAEHQGELWVASPLKKQRFRLSDGLCMEDEQFSVKHYDARVKDGVVQLRG.

Associates with NirB.

It is found in the cytoplasm. It carries out the reaction NH4(+) + 3 NAD(+) + 2 H2O = nitrite + 3 NADH + 5 H(+). Required for activity of the reductase. The protein is Nitrite reductase (NADH) small subunit (nirD) of Salmonella typhi.